Reading from the N-terminus, the 37-residue chain is Mu-agatoxin-Aa1b (37 aa).

Intrachain disulfides connect Cys2/Cys18, Cys9/Cys23, Cys17/Cys33, and Cys25/Cys31. Ser37 is modified (serine amide).

It belongs to the neurotoxin 07 (Beta/delta-agtx) family. 01 (aga-2) subfamily. Expressed by the venom gland.

Its subcellular location is the secreted. In terms of biological role, insecticidal neurotoxin that induces an irreversible spastic paralysis when injected into insects. Modifies presynaptic voltage-gated sodium channels (Nav), causing them to open at the normal resting potential of the nerve. This leads to spontaneous release of neurotransmitter and repetitive action potentials in motor neurons. The sequence is that of Mu-agatoxin-Aa1b from Agelenopsis aperta (North American funnel-web spider).